The primary structure comprises 587 residues: Polyphenol oxidase E, chloroplastic (587 aa).

Residues 1–87 (MSSSSSITTT…AANLAPLATA (87 aa)) constitute a chloroplast transit peptide. 2 disulfides stabilise this stretch: C98–C114 and C113–C180. 6 residues coordinate Cu cation: H179, H197, H206, H328, H332, and H363. Residues 183-197 (CNGAYKVGGKELQVH) constitute a cross-link (2'-(S-cysteinyl)-histidine (Cys-His)).

The protein belongs to the tyrosinase family. Cu(2+) is required as a cofactor.

Its subcellular location is the plastid. The protein localises to the chloroplast thylakoid lumen. The catalysed reaction is 2 catechol + O2 = 2 1,2-benzoquinone + 2 H2O. In terms of biological role, catalyzes the oxidation of mono- and o-diphenols to o-diquinones. The sequence is that of Polyphenol oxidase E, chloroplastic from Solanum lycopersicum (Tomato).